A 406-amino-acid polypeptide reads, in one-letter code: Serine hydroxymethyltransferase (406 aa).

Residues leucine 111 and 115 to 117 (GHL) contribute to the (6S)-5,6,7,8-tetrahydrofolate site. Lysine 220 carries the N6-(pyridoxal phosphate)lysine modification. 340–342 (SAF) lines the (6S)-5,6,7,8-tetrahydrofolate pocket.

Belongs to the SHMT family. In terms of assembly, homodimer. The cofactor is pyridoxal 5'-phosphate.

Its subcellular location is the cytoplasm. It carries out the reaction (6R)-5,10-methylene-5,6,7,8-tetrahydrofolate + glycine + H2O = (6S)-5,6,7,8-tetrahydrofolate + L-serine. It participates in one-carbon metabolism; tetrahydrofolate interconversion. It functions in the pathway amino-acid biosynthesis; glycine biosynthesis; glycine from L-serine: step 1/1. Catalyzes the reversible interconversion of serine and glycine with tetrahydrofolate (THF) serving as the one-carbon carrier. This reaction serves as the major source of one-carbon groups required for the biosynthesis of purines, thymidylate, methionine, and other important biomolecules. Also exhibits THF-independent aldolase activity toward beta-hydroxyamino acids, producing glycine and aldehydes, via a retro-aldol mechanism. The protein is Serine hydroxymethyltransferase of Mycoplasma genitalium (strain ATCC 33530 / DSM 19775 / NCTC 10195 / G37) (Mycoplasmoides genitalium).